A 441-amino-acid chain; its full sequence is MRTVCLVKNQQPLGATIKRHEITGDILVARVIHGGLVERNGLLYAGDKLVEVNGVPVEGLDPEQVIHILAMSCGTIMFKVIPVSAPPVSSQTTVYVRAMIDYWPQEDPDIPCMDAGLPFLKGDILQIVDQSDALWWQARKISDIAICAGLIPSNHLLKRKQREFWWSQPYQPHTCLKSTRSKEEFVGDGQQFFIAGFRQQHANMRCTCSCYSAVGAPYEEVVRYQRQPADKHRLIVLVGPSGVGVNELRRQLIGCNPSCFQSAVPHTTRSPKSYEMDGREYHYVSRETFESLMYGHRMLEFGEYKGHLYGTSVNAVLAVLDEGKICVMDLEPQDIQLARTRELKPYVIFIKPPSMSSMRHSRRNAKIITDYFVDMKFKDEDLQEMEELAQKMESQFGQFFDHVIVNDNLQDARAQLLSAIQKAEEELQWVPEAWVSPGAES.

One can recognise a PDZ domain in the interval 1-84 (MRTVCLVKNQ…TIMFKVIPVS (84 aa)). The region spanning 91–161 (QTTVYVRAMI…PSNHLLKRKQ (71 aa)) is the SH3 domain. In terms of domain architecture, Guanylate kinase-like spans 232–421 (HRLIVLVGPS…ARAQLLSAIQ (190 aa)). Residues 373-430 (VDMKFKDEDLQEMEELAQKMESQFGQFFDHVIVNDNLQDARAQLLSAIQKAEEELQWV) adopt a coiled-coil conformation.

Belongs to the MAGUK family. As to quaternary structure, interacts with MPDZ. May interact with GRIA2. Forms a complex with CRB1 and PALS1. Interacts with FASLG. In terms of tissue distribution, highly expressed in brain and detected in lung, and bone (at protein level). Also expressed in intestine and spleen.

The protein localises to the cytoplasm. May play a role in retinal photoreceptors development. This Rattus norvegicus (Rat) protein is MAGUK p55 subfamily member 4 (Mpp4).